The chain runs to 126 residues: Protein ApaG (126 aa).

An ApaG domain is found at 2-126; that stretch reads SALDTSIRVE…FRLATPGLLH (125 aa).

This Shewanella baltica (strain OS223) protein is Protein ApaG.